The chain runs to 342 residues: Dual-specificity RNA methyltransferase RlmN (342 aa).

E92 (proton acceptor) is an active-site residue. In terms of domain architecture, Radical SAM core spans 98 to 329 (DLPRSTLCVS…THVRRSRGGE (232 aa)). C105 and C334 are oxidised to a cystine. Residues C112, C116, and C119 each coordinate [4Fe-4S] cluster. S-adenosyl-L-methionine-binding positions include 161–162 (GE), S193, 215–217 (SLH), and N291. Residue C334 is the S-methylcysteine intermediate of the active site.

Belongs to the radical SAM superfamily. RlmN family. [4Fe-4S] cluster is required as a cofactor.

It localises to the cytoplasm. It catalyses the reaction adenosine(2503) in 23S rRNA + 2 reduced [2Fe-2S]-[ferredoxin] + 2 S-adenosyl-L-methionine = 2-methyladenosine(2503) in 23S rRNA + 5'-deoxyadenosine + L-methionine + 2 oxidized [2Fe-2S]-[ferredoxin] + S-adenosyl-L-homocysteine. It carries out the reaction adenosine(37) in tRNA + 2 reduced [2Fe-2S]-[ferredoxin] + 2 S-adenosyl-L-methionine = 2-methyladenosine(37) in tRNA + 5'-deoxyadenosine + L-methionine + 2 oxidized [2Fe-2S]-[ferredoxin] + S-adenosyl-L-homocysteine. Its function is as follows. Specifically methylates position 2 of adenine 2503 in 23S rRNA and position 2 of adenine 37 in tRNAs. m2A2503 modification seems to play a crucial role in the proofreading step occurring at the peptidyl transferase center and thus would serve to optimize ribosomal fidelity. In Syntrophobacter fumaroxidans (strain DSM 10017 / MPOB), this protein is Dual-specificity RNA methyltransferase RlmN.